Consider the following 88-residue polypeptide: Secretion system apparatus protein SsaS (88 aa).

2 helical membrane passes run 15 to 35 (WIVL…GVIV) and 55 to 75 (LLAI…ILLN).

It belongs to the FliQ/MopD/SpaQ family.

It is found in the cell membrane. In terms of biological role, part of a type III secretion system. The protein is Secretion system apparatus protein SsaS (ssaS) of Salmonella typhimurium (strain LT2 / SGSC1412 / ATCC 700720).